A 226-amino-acid polypeptide reads, in one-letter code: Phosphoglycolate phosphatase (226 aa).

Catalysis depends on aspartate 9, which acts as the Nucleophile. 2 residues coordinate Mg(2+): aspartate 9 and aspartate 11. Substrate is bound at residue lysine 150. 2 residues coordinate Mg(2+): aspartate 173 and aspartate 177.

It belongs to the archaeal SPP-like hydrolase family. The cofactor is Mg(2+).

The enzyme catalyses 2-phosphoglycolate + H2O = glycolate + phosphate. Its function is as follows. Catalyzes the dephosphorylation of 2-phosphoglycolate. This chain is Phosphoglycolate phosphatase, found in Methanosarcina acetivorans (strain ATCC 35395 / DSM 2834 / JCM 12185 / C2A).